A 124-amino-acid polypeptide reads, in one-letter code: Ribonuclease pancreatic (124 aa).

The segment at 1 to 24 (KETAAAKFQRQHMDSSTSSASSSN) is disordered. Substrate is bound by residues K7 and R10. H12 acts as the Proton acceptor in catalysis. 4 disulfide bridges follow: C26–C84, C40–C95, C58–C110, and C65–C72. N34 carries N-linked (GlcNAc...) asparagine; in river-breed only glycosylation. Substrate-binding positions include 41-45 (KPVNT), K66, and R85. The active-site Proton donor is H119.

This sequence belongs to the pancreatic ribonuclease family. Monomer. Interacts with and forms tight 1:1 complexes with RNH1. Dimerization of two such complexes may occur. Interaction with RNH1 inhibits this protein. In terms of processing, swamp breed ribonuclease do not bind carbohydrate, but there is evidence of a polymorphic form that does. In terms of tissue distribution, pancreas.

The protein resides in the secreted. It catalyses the reaction an [RNA] containing cytidine + H2O = an [RNA]-3'-cytidine-3'-phosphate + a 5'-hydroxy-ribonucleotide-3'-[RNA].. It carries out the reaction an [RNA] containing uridine + H2O = an [RNA]-3'-uridine-3'-phosphate + a 5'-hydroxy-ribonucleotide-3'-[RNA].. In terms of biological role, endonuclease that catalyzes the cleavage of RNA on the 3' side of pyrimidine nucleotides. Acts on single-stranded and double-stranded RNA. The polypeptide is Ribonuclease pancreatic (RNASE1) (Bubalus bubalis (Domestic water buffalo)).